Consider the following 380-residue polypeptide: Chaperone protein DnaJ (380 aa).

The J domain occupies 5-70 (DYYEVLGVER…SKRAAYDQYG (66 aa)). The segment at 139–217 (GTTVNIRVPT…CHGEGRVEES (79 aa)) adopts a CR-type zinc-finger fold. Residues cysteine 152, cysteine 155, cysteine 169, cysteine 172, cysteine 191, cysteine 194, cysteine 205, and cysteine 208 each contribute to the Zn(2+) site. CXXCXGXG motif repeat units lie at residues 152 to 159 (CKPCDGSG), 169 to 176 (CPTCGGIG), 191 to 198 (CPRCHGHG), and 205 to 212 (CDSCHGEG).

It belongs to the DnaJ family. As to quaternary structure, homodimer. The cofactor is Zn(2+).

Its subcellular location is the cytoplasm. Participates actively in the response to hyperosmotic and heat shock by preventing the aggregation of stress-denatured proteins and by disaggregating proteins, also in an autonomous, DnaK-independent fashion. Unfolded proteins bind initially to DnaJ; upon interaction with the DnaJ-bound protein, DnaK hydrolyzes its bound ATP, resulting in the formation of a stable complex. GrpE releases ADP from DnaK; ATP binding to DnaK triggers the release of the substrate protein, thus completing the reaction cycle. Several rounds of ATP-dependent interactions between DnaJ, DnaK and GrpE are required for fully efficient folding. Also involved, together with DnaK and GrpE, in the DNA replication of plasmids through activation of initiation proteins. This chain is Chaperone protein DnaJ, found in Pseudomonas syringae pv. tomato (strain ATCC BAA-871 / DC3000).